We begin with the raw amino-acid sequence, 486 residues long: CDT1-like protein b (486 aa).

2 disordered regions span residues 273–294 (PEGG…PSRS) and 348–371 (VKDD…ASDD). The span at 281 to 294 (LRSTNSLARGPSRS) shows a compositional bias: polar residues. The segment covering 348-363 (VKDDISNESGDEKSNY) has biased composition (basic and acidic residues).

The protein belongs to the Cdt1 family. As to expression, expressed in proliferating (e.g. shoot and root apical meristems, organ primordia, guard cells and stomatal lineage) and endoreplicating cells (e.g. developing trichomes).

It localises to the nucleus. Functionally, member of the pre-replication complex. Regulates endoreduplication. Involved in the coordination of cell and plastid division. In Arabidopsis thaliana (Mouse-ear cress), this protein is CDT1-like protein b (CDT1B).